We begin with the raw amino-acid sequence, 482 residues long: Protein nucleotidyltransferase YdiU (482 aa).

Residues Gly88, Gly90, Arg91, Lys111, Asp123, Gly124, Arg174, and Arg181 each coordinate ATP. Catalysis depends on Asp250, which acts as the Proton acceptor. Mg(2+) contacts are provided by Asn251 and Asp260. ATP is bound at residue Asp260.

The protein belongs to the SELO family. Mg(2+) serves as cofactor. Mn(2+) is required as a cofactor.

The catalysed reaction is L-seryl-[protein] + ATP = 3-O-(5'-adenylyl)-L-seryl-[protein] + diphosphate. It catalyses the reaction L-threonyl-[protein] + ATP = 3-O-(5'-adenylyl)-L-threonyl-[protein] + diphosphate. It carries out the reaction L-tyrosyl-[protein] + ATP = O-(5'-adenylyl)-L-tyrosyl-[protein] + diphosphate. The enzyme catalyses L-histidyl-[protein] + UTP = N(tele)-(5'-uridylyl)-L-histidyl-[protein] + diphosphate. The catalysed reaction is L-seryl-[protein] + UTP = O-(5'-uridylyl)-L-seryl-[protein] + diphosphate. It catalyses the reaction L-tyrosyl-[protein] + UTP = O-(5'-uridylyl)-L-tyrosyl-[protein] + diphosphate. Functionally, nucleotidyltransferase involved in the post-translational modification of proteins. It can catalyze the addition of adenosine monophosphate (AMP) or uridine monophosphate (UMP) to a protein, resulting in modifications known as AMPylation and UMPylation. The chain is Protein nucleotidyltransferase YdiU from Cronobacter sakazakii (strain ATCC BAA-894) (Enterobacter sakazakii).